The primary structure comprises 189 residues: Leucine repeat adapter protein 25 (189 aa).

Phosphoserine is present on Ser28. Residues 54–82 are disordered; it reads ELSRAARAPDGPRHAAGSANSGSAAGPRR. The span at 68–79 shows a compositional bias: low complexity; sequence AAGSANSGSAAG. One copy of the LRR repeat lies at 86-114; sequence LDSALAALRKEMVGLRQLDMSLLCQLWGL. A disordered region spans residues 136-175; it reads SSLHSDSSYPPDAGLSDDEEPPDASLPPDPPPLTVPQTHN. The span at 159 to 169 shows a compositional bias: pro residues; the sequence is ASLPPDPPPLT. Ser188 is modified (phosphoserine).

The protein belongs to the FAM89 family. In terms of assembly, interacts with SKI. Interacts (via LRR repeat) with CDC42BPA (via AGC-kinase C-terminal domain), CDC42BPB (via AGC-kinase C-terminal domain) and LIMK1 (via LIM zinc-binding domains). Forms a tripartite complex with CDC42BPA, CDC42BPB and LIMK1. (Microbial infection) Interacts with mouse mammary tumor virus (MMTV) envelope glycoprotein gp70. Widely expressed. Expressed in the early postnatal brain.

It is found in the cytoplasm. Its subcellular location is the cell projection. The protein resides in the lamellipodium. The protein localises to the cell surface. Negatively regulates TGF-beta-induced signaling; in cooperation with SKI prevents the translocation of SMAD2 from the nucleus to the cytoplasm in response to TGF-beta. Acts as an adapter that mediates the specific recognition of LIMK1 by CDC42BPA and CDC42BPB in the lamellipodia. LRAP25-mediated CDC42BPA/CDC42BPB targeting to LIMK1 and the lamellipodium results in LIMK1 activation and the subsequent phosphorylation of CFL1 which is important for lamellipodial F-actin regulation. In terms of biological role, (Microbial infection) May be a receptor for mouse mammary tumor virus (MMTV). The sequence is that of Leucine repeat adapter protein 25 from Mus musculus (Mouse).